The sequence spans 182 residues: Lipoprotein signal peptidase (182 aa).

3 consecutive transmembrane segments (helical) span residues 12–32 (VAVF…TKAW), 68–88 (ATWV…VAGV), and 91–111 (VSMK…GNLI). Catalysis depends on residues D127 and D140. The chain crosses the membrane as a helical span at residues 135 to 155 (VGNVADIYLVVAGVVLVILIL).

The protein belongs to the peptidase A8 family.

The protein resides in the cell membrane. The catalysed reaction is Release of signal peptides from bacterial membrane prolipoproteins. Hydrolyzes -Xaa-Yaa-Zaa-|-(S,diacylglyceryl)Cys-, in which Xaa is hydrophobic (preferably Leu), and Yaa (Ala or Ser) and Zaa (Gly or Ala) have small, neutral side chains.. It participates in protein modification; lipoprotein biosynthesis (signal peptide cleavage). Its function is as follows. This protein specifically catalyzes the removal of signal peptides from prolipoproteins. The polypeptide is Lipoprotein signal peptidase (Bifidobacterium longum (strain DJO10A)).